The sequence spans 655 residues: WD repeat-containing protein 70 (655 aa).

Disordered regions lie at residues 1-24 (MEHSGPSEVTGADTAGPDPQLAVT) and 43-170 (FEQT…PIHR). Residues 45 to 78 (QTRRTAVERSRKTLEAREKEEEMNREKELRKQLE) show a composition bias toward basic and acidic residues. Residues 99 to 112 (RDTSSSDSDHSSGS) are compositionally biased toward low complexity. The span at 148–165 (EEGEDDDDDDLEDEGEED) shows a compositional bias: acidic residues. 7 WD repeats span residues 181 to 220 (HGTKTVSALGLDPSGARLVTGGYDYDVKFWDFAGMDASFK), 228 to 269 (CECH…ECIK), 282 to 322 (GHTA…KQKS), 331 to 370 (GKKVIPTTCTYSRDGNLVAAACQNGSIQIWDRNLTVHPKF), 377 to 416 (APGTDTSCVAFSYDGNVLASRGGDDTLKLWDVRQFNKPLF), 422 to 467 (PTLF…RVYE), and 470 to 509 (ITDASVVRCLWHPKLNQIMVGTGNGLAKVYYDPNKSQRGA). A Glycyl lysine isopeptide (Lys-Gly) (interchain with G-Cter in SUMO2) cross-link involves residue K297. N6-acetyllysine is present on K453. The span at 541–566 (REPRQRSTRKQLEKDRLDPLKSHKPE) shows a compositional bias: basic and acidic residues. The disordered stretch occupies residues 541–582 (REPRQRSTRKQLEKDRLDPLKSHKPEPPVAGPGRGGRVGTHG). Residues 572-582 (PGRGGRVGTHG) are compositionally biased toward gly residues. The residue at position 580 (T580) is a Phosphothreonine. Glycyl lysine isopeptide (Lys-Gly) (interchain with G-Cter in SUMO2) cross-links involve residues K591 and K597. S622 and S639 each carry phosphoserine. A disordered region spans residues 632 to 655 (TMFAQVESDDEESKNEPEWKKRKI). Over residues 645 to 655 (KNEPEWKKRKI) the composition is skewed to basic and acidic residues.

It belongs to the WD repeat GAD-1 family.

This Rattus norvegicus (Rat) protein is WD repeat-containing protein 70 (Wdr70).